The sequence spans 489 residues: Cytochrome P450 302a1, mitochondrial (489 aa).

Cys434 serves as a coordination point for heme.

The protein belongs to the cytochrome P450 family. Heme is required as a cofactor. In terms of tissue distribution, complex coexpression pattern of dib (disembodied) and sad (shade) in the early embryo that restricts to the prothoracic gland cells of the developing ring gland during late embryogenesis. In larvae and adult, coexpression is seen in prothoracic gland and follicle cells of the ovary. In adults, coexpression is seen in the follicle cells.

The protein localises to the mitochondrion membrane. The enzyme catalyses 2,22-dideoxyecdysone + 2 reduced [adrenodoxin] + O2 + 2 H(+) = 2-deoxyecdysone + 2 oxidized [adrenodoxin] + H2O. It functions in the pathway steroid biosynthesis; ecdysteroid biosynthesis. Its function is as follows. Required for CNS development; negatively regulates glial cell division in the embryonic midline. Involved in the metabolism of insect hormones; responsible for ecdysteroid C22-hydroxylase activity. May be involved in the breakdown of synthetic insecticides. The sequence is that of Cytochrome P450 302a1, mitochondrial from Drosophila melanogaster (Fruit fly).